Here is a 159-residue protein sequence, read N- to C-terminus: 17 kDa surface antigen (159 aa).

An N-terminal signal peptide occupies residues Met-1 to Ala-19. Cys-20 is lipidated: N-palmitoyl cysteine. Cys-20 carries S-diacylglycerol cysteine lipidation.

It belongs to the rickettsiale 17 kDa surface antigen family.

It is found in the cell outer membrane. The sequence is that of 17 kDa surface antigen (omp) from Rickettsia prowazekii (strain Madrid E).